The chain runs to 630 residues: PAN2-PAN3 deadenylation complex subunit PAN3 (630 aa).

The C3H1-type zinc finger occupies 7–36 (SAKDTLCKNILIYGYCKFENKGCAFSHHKP). Disordered stretches follow at residues 38 to 72 (VGQPPVSASSSSGYSGNSSPAEAKRKFNLNTPSFQ) and 135 to 171 (GFGSEYPSSPNTSGAGQPPNPYLTGNGHPASMAQSSG). Residues 44-56 (SASSSSGYSGNSS) show a composition bias toward low complexity. Polar residues predominate over residues 140–149 (YPSSPNTSGA). Residues 231 to 501 (QTLPRSNLPE…LDRFSQRYLT (271 aa)) are pseudokinase domain. ATP contacts are provided by residues R283, 333–340 (DYFPNSST), and 388–389 (TK). The stretch at 502-540 (TRLFSTINNLEDSTDFMESQITTELENARLFRLLTKLNF) forms a coiled coil. The interval 541 to 630 (IIDRPEAKDW…DSVFRNLTRD (90 aa)) is knob domain.

This sequence belongs to the protein kinase superfamily. PAN3 family. In terms of assembly, homodimer. Forms a heterotrimer with a catalytic subunit PAN2 to form the poly(A)-nuclease (PAN) deadenylation complex. Interacts (via PAM-2 motif) with poly(A)-binding protein PAB1 (via PABC domain), conferring substrate specificity of the enzyme complex.

Its subcellular location is the cytoplasm. Its function is as follows. Regulatory subunit of the poly(A)-nuclease (PAN) deadenylation complex, one of two cytoplasmic mRNA deadenylases involved in mRNA turnover. PAN specifically shortens poly(A) tails of RNA and the activity is stimulated by poly(A)-binding protein PAB1. PAN deadenylation is followed by rapid degradation of the shortened mRNA tails by the CCR4-NOT complex. Deadenylated mRNAs are then degraded by two alternative mechanisms, namely exosome-mediated 3'-5' exonucleolytic degradation, or deadenylation-dependent mRNA decaping and subsequent 5'-3' exonucleolytic degradation by XRN1. May also be involved in post-transcriptional maturation of mRNA poly(A) tails. PAN3 acts as a positive regulator for PAN activity, recruiting the catalytic subunit PAN2 to mRNA via its interaction with RNA and with PAB1. This is PAN2-PAN3 deadenylation complex subunit PAN3 from Scheffersomyces stipitis (strain ATCC 58785 / CBS 6054 / NBRC 10063 / NRRL Y-11545) (Yeast).